The sequence spans 427 residues: MAP kinase-interacting serine/threonine-protein kinase 1 (427 aa).

Basic and acidic residues predominate over residues 1–11 (MVSSQKLEKPI). Positions 1 to 37 (MVSSQKLEKPIEMGSSEPLPIVDSDKRRKKKRKTRAT) are disordered. Threonine 34 is subject to Phosphothreonine; by PAK2. Serine 39 bears the Phosphoserine; by PAK2 mark. Positions 49–333 (QLTSELLGEG…AAQVLQHPWV (285 aa)) constitute a Protein kinase domain. ATP-binding positions include 55–63 (LGEGAYAKV) and lysine 78. The active-site Proton acceptor is aspartate 170. Serine 180 and serine 185 each carry phosphoserine. Phosphothreonine is present on residues threonine 209, threonine 214, and threonine 344. Positions 407–427 (RALAQAGRSRDANPCLTPAGL) are disordered.

It belongs to the protein kinase superfamily. CAMK Ser/Thr protein kinase family. As to quaternary structure, interacts with the C-terminal regions of EIF4G1 and EIF4G2. Also binds to dephosphorylated ERK1 and ERK2, and to the p38 kinases. Requires Mg(2+) as cofactor. Dual phosphorylation of Thr-209 and Thr-214 activates the kinase. Phosphorylation of Thr-344 activates the kinase. MAPK3/ERK1 is one of the kinases which activate MKNK1/MNK1. Phosphorylation by PAK2 leads to a reduced phosphorylation of EIF4G1. As to expression, ubiquitously expressed in all tissues examined, with high levels in skeletal muscle.

It catalyses the reaction L-seryl-[protein] + ATP = O-phospho-L-seryl-[protein] + ADP + H(+). The catalysed reaction is L-threonyl-[protein] + ATP = O-phospho-L-threonyl-[protein] + ADP + H(+). With respect to regulation, phosphorylated and activated by the p38 kinases and kinases in the Erk pathway. In terms of biological role, may play a role in the response to environmental stress and cytokines. Appears to regulate translation by phosphorylating EIF4E, thus increasing the affinity of this protein for the 7-methylguanosine-containing mRNA cap. The sequence is that of MAP kinase-interacting serine/threonine-protein kinase 1 (Mknk1) from Mus musculus (Mouse).